Reading from the N-terminus, the 461-residue chain is Cysteine--tRNA ligase (461 aa).

Cys28 is a binding site for Zn(2+). A 'HIGH' region motif is present at residues 30–40 (ITVYDLCHIGH). Positions 209, 234, and 238 each coordinate Zn(2+). The 'KMSKS' region motif lies at 266 to 270 (KMSKS). Residue Lys269 participates in ATP binding.

The protein belongs to the class-I aminoacyl-tRNA synthetase family. As to quaternary structure, monomer. Zn(2+) serves as cofactor.

The protein localises to the cytoplasm. The catalysed reaction is tRNA(Cys) + L-cysteine + ATP = L-cysteinyl-tRNA(Cys) + AMP + diphosphate. This is Cysteine--tRNA ligase from Enterobacter sp. (strain 638).